The chain runs to 286 residues: Beta-lactamase SHV-5 (286 aa).

A signal peptide spans 1-21 (MRYIRLCIISLLATLPLAVHA). Ser-66 functions as the Acyl-ester intermediate in the catalytic mechanism. Cys-73 and Cys-119 are joined by a disulfide. The active-site Proton acceptor is the Glu-164. Residue 230-232 (KTG) coordinates substrate.

Belongs to the class-A beta-lactamase family.

It carries out the reaction a beta-lactam + H2O = a substituted beta-amino acid. Its function is as follows. SHV enzymes hydrolyze broad spectrum cephalosporins notably cefotaxime and ceftazidime. SHV-5 causes particularly high levels of resistance to aztreonam and ceftazidime. In Klebsiella pneumoniae, this protein is Beta-lactamase SHV-5 (bla).